A 153-amino-acid polypeptide reads, in one-letter code: Ribonuclease H (153 aa).

The 141-residue stretch at 1-141 (MKHVHIFTDG…ADELARKGME (141 aa)) folds into the RNase H type-1 domain. The Mg(2+) site is built by aspartate 9, glutamate 47, aspartate 69, and aspartate 133. Residues 123–153 (HAGHPENERADELARKGMEPFKKARRADAVK) form a disordered region. Basic and acidic residues predominate over residues 125–153 (GHPENERADELARKGMEPFKKARRADAVK).

Belongs to the RNase H family. In terms of assembly, monomer. It depends on Mg(2+) as a cofactor.

The protein localises to the cytoplasm. It catalyses the reaction Endonucleolytic cleavage to 5'-phosphomonoester.. Endonuclease that specifically degrades the RNA of RNA-DNA hybrids. This Rhizobium meliloti (strain 1021) (Ensifer meliloti) protein is Ribonuclease H.